A 228-amino-acid polypeptide reads, in one-letter code: 7-cyano-7-deazaguanine synthase (228 aa).

8–18 (LSGGMDSATTL) lines the ATP pocket. The Zn(2+) site is built by cysteine 188, cysteine 198, cysteine 201, and cysteine 204.

This sequence belongs to the QueC family. Requires Zn(2+) as cofactor.

The catalysed reaction is 7-carboxy-7-deazaguanine + NH4(+) + ATP = 7-cyano-7-deazaguanine + ADP + phosphate + H2O + H(+). It participates in purine metabolism; 7-cyano-7-deazaguanine biosynthesis. Catalyzes the ATP-dependent conversion of 7-carboxy-7-deazaguanine (CDG) to 7-cyano-7-deazaguanine (preQ(0)). The protein is 7-cyano-7-deazaguanine synthase of Nitrosomonas europaea (strain ATCC 19718 / CIP 103999 / KCTC 2705 / NBRC 14298).